The following is a 792-amino-acid chain: Phenylalanine--tRNA ligase beta subunit (792 aa).

In terms of domain architecture, tRNA-binding spans 39–150; it reads APAFHKVVVA…PDAPVGTDFR (112 aa). Residues 405-480 enclose the B5 domain; that stretch reads PARDPIRLGL…RMYGYNRIAA (76 aa). 4 residues coordinate Mg(2+): Asp-458, Asp-464, Glu-467, and Glu-468. An FDX-ACB domain is found at 698–791; it reads SKYPPIRRDI…LENRFGARLR (94 aa).

It belongs to the phenylalanyl-tRNA synthetase beta subunit family. Type 1 subfamily. Tetramer of two alpha and two beta subunits. It depends on Mg(2+) as a cofactor.

It is found in the cytoplasm. It carries out the reaction tRNA(Phe) + L-phenylalanine + ATP = L-phenylalanyl-tRNA(Phe) + AMP + diphosphate + H(+). In Nitrosospira multiformis (strain ATCC 25196 / NCIMB 11849 / C 71), this protein is Phenylalanine--tRNA ligase beta subunit.